A 285-amino-acid chain; its full sequence is Homeobox protein vex1 (285 aa).

2 disordered regions span residues 30 to 54 and 69 to 88; these read KSGN…LPSV and NEER…APQE. Residues 69–80 are compositionally biased toward basic and acidic residues; the sequence is NEERSPPVKDQL. The segment at residues 131–190 is a DNA-binding region (homeobox); sequence AARARTKFSPEQLEELERSFKENRYIGSSEKRRLSKVLKLSETQIKTWFQNRRMKFKRQT.

Widely expressed in the embryo prior to gastrulation. Becomes restricted to the ventral marginal zone by mid/late gastrulation. Ventral localization persists during gastrulation and neurulation in the ventral region of the closed blastopore and in the proctodeum during tail bud stages.

It localises to the nucleus. In terms of biological role, transcriptional repressor. Acts in a ventral signaling pathway downstream of bmp4 to antagonize the Spemann organizer and ventrally pattern the embryonic mesoderm. Represses transcription of the dorsal genes gsc and otx2. The sequence is that of Homeobox protein vex1 from Xenopus laevis (African clawed frog).